Here is a 191-residue protein sequence, read N- to C-terminus: 3-isopropylmalate dehydratase small subunit (191 aa).

Belongs to the LeuD family. LeuD type 1 subfamily. Heterodimer of LeuC and LeuD.

It carries out the reaction (2R,3S)-3-isopropylmalate = (2S)-2-isopropylmalate. The protein operates within amino-acid biosynthesis; L-leucine biosynthesis; L-leucine from 3-methyl-2-oxobutanoate: step 2/4. In terms of biological role, catalyzes the isomerization between 2-isopropylmalate and 3-isopropylmalate, via the formation of 2-isopropylmaleate. The protein is 3-isopropylmalate dehydratase small subunit of Anaeromyxobacter dehalogenans (strain 2CP-C).